The chain runs to 274 residues: tRNA (cytosine(48)-C(5))-methyltransferase (274 aa).

S-adenosyl-L-methionine contacts are provided by residues 91–97, Glu115, Arg120, Asp142, Asp163, Asn169, and Arg189; that span reads CAAPGGK. Cys212 acts as the Nucleophile in catalysis.

This sequence belongs to the class I-like SAM-binding methyltransferase superfamily. RsmB/NOP family.

The protein resides in the cytoplasm. It catalyses the reaction cytidine(48) in tRNA precursor + S-adenosyl-L-methionine = 5-methylcytidine(48) in tRNA precursor + S-adenosyl-L-homocysteine + H(+). It carries out the reaction cytidine(40) in tRNA precursor + S-adenosyl-L-methionine = 5-methylcytidine(40) in tRNA precursor + S-adenosyl-L-homocysteine + H(+). Catalyzes AdoMet-dependent formation of m5C in tRNA. Cytidine residue at either position 40 or position 48 is likely to be methylated. In Methanocaldococcus jannaschii (strain ATCC 43067 / DSM 2661 / JAL-1 / JCM 10045 / NBRC 100440) (Methanococcus jannaschii), this protein is tRNA (cytosine(48)-C(5))-methyltransferase (trm4).